Consider the following 325-residue polypeptide: tRNA N6-adenosine threonylcarbamoyltransferase (325 aa).

Residues His-111 and His-115 each contribute to the Fe cation site. Residues 134 to 138 (LVSGG), Asp-167, Gly-180, Asp-184, and Asn-284 each bind substrate. Asp-312 serves as a coordination point for Fe cation.

This sequence belongs to the KAE1 / TsaD family. It depends on Fe(2+) as a cofactor.

It localises to the cytoplasm. It carries out the reaction L-threonylcarbamoyladenylate + adenosine(37) in tRNA = N(6)-L-threonylcarbamoyladenosine(37) in tRNA + AMP + H(+). Required for the formation of a threonylcarbamoyl group on adenosine at position 37 (t(6)A37) in tRNAs that read codons beginning with adenine. Is involved in the transfer of the threonylcarbamoyl moiety of threonylcarbamoyl-AMP (TC-AMP) to the N6 group of A37, together with TsaE and TsaB. TsaD likely plays a direct catalytic role in this reaction. This Trichodesmium erythraeum (strain IMS101) protein is tRNA N6-adenosine threonylcarbamoyltransferase.